The sequence spans 193 residues: Segregation and condensation protein B (193 aa).

This sequence belongs to the ScpB family. Homodimer. Homodimerization may be required to stabilize the binding of ScpA to the Smc head domains. Component of a cohesin-like complex composed of ScpA, ScpB and the Smc homodimer, in which ScpA and ScpB bind to the head domain of Smc. The presence of the three proteins is required for the association of the complex with DNA.

Its subcellular location is the cytoplasm. Its function is as follows. Participates in chromosomal partition during cell division. May act via the formation of a condensin-like complex containing Smc and ScpA that pull DNA away from mid-cell into both cell halves. The polypeptide is Segregation and condensation protein B (Shouchella clausii (strain KSM-K16) (Alkalihalobacillus clausii)).